Here is a 664-residue protein sequence, read N- to C-terminus: DNA topoisomerase 4 subunit B (664 aa).

ATP-binding positions include Tyr-7, Asn-47, Asp-74, 114–120 (GLHGVGA), and Lys-341. Residues 386–418 (REAARKAREDARSGKKNKRKDTLLSGKLTPAQS) are disordered. Residues 387–398 (EAARKAREDARS) show a composition bias toward basic and acidic residues. Residues 424–538 (NELYLVEGDS…AGRVFIALPP (115 aa)) enclose the Toprim domain. Mg(2+)-binding residues include Glu-430, Asp-503, and Asp-505.

Belongs to the type II topoisomerase family. ParE type 2 subfamily. Heterotetramer composed of ParC and ParE. Mg(2+) serves as cofactor. It depends on Mn(2+) as a cofactor. The cofactor is Ca(2+).

The catalysed reaction is ATP-dependent breakage, passage and rejoining of double-stranded DNA.. Functionally, topoisomerase IV is essential for chromosome segregation. It relaxes supercoiled DNA. Performs the decatenation events required during the replication of a circular DNA molecule. The polypeptide is DNA topoisomerase 4 subunit B (Staphylococcus epidermidis (strain ATCC 35984 / DSM 28319 / BCRC 17069 / CCUG 31568 / BM 3577 / RP62A)).